A 640-amino-acid chain; its full sequence is Threonine--tRNA ligase (640 aa).

The TGS domain occupies 1 to 61 (MPIITLPDGS…ERDATLQIIT (61 aa)). Residues 242–533 (DHRRIGKQLD…LIEHYAGAFP (292 aa)) are catalytic. Zn(2+) is bound by residues cysteine 333, histidine 384, and histidine 510.

It belongs to the class-II aminoacyl-tRNA synthetase family. Homodimer. Zn(2+) is required as a cofactor.

The protein localises to the cytoplasm. It carries out the reaction tRNA(Thr) + L-threonine + ATP = L-threonyl-tRNA(Thr) + AMP + diphosphate + H(+). Its function is as follows. Catalyzes the attachment of threonine to tRNA(Thr) in a two-step reaction: L-threonine is first activated by ATP to form Thr-AMP and then transferred to the acceptor end of tRNA(Thr). Also edits incorrectly charged L-seryl-tRNA(Thr). The protein is Threonine--tRNA ligase of Pseudomonas paraeruginosa (strain DSM 24068 / PA7) (Pseudomonas aeruginosa (strain PA7)).